The primary structure comprises 224 residues: LexA repressor (224 aa).

Positions 31–51 (RAEIATELGFRSANAAEEHLQ) form a DNA-binding region, H-T-H motif. Active-site for autocatalytic cleavage activity residues include Ser142 and Lys179.

The protein belongs to the peptidase S24 family. As to quaternary structure, homodimer.

The enzyme catalyses Hydrolysis of Ala-|-Gly bond in repressor LexA.. Its function is as follows. Represses a number of genes involved in the response to DNA damage (SOS response), including recA and lexA. In the presence of single-stranded DNA, RecA interacts with LexA causing an autocatalytic cleavage which disrupts the DNA-binding part of LexA, leading to derepression of the SOS regulon and eventually DNA repair. In Albidiferax ferrireducens (strain ATCC BAA-621 / DSM 15236 / T118) (Rhodoferax ferrireducens), this protein is LexA repressor.